A 211-amino-acid polypeptide reads, in one-letter code: Mitotic spindle assembly checkpoint protein MAD2B (211 aa).

The HORMA domain occupies 13–203 (QVVADILCEF…SDILKMQLYV (191 aa)).

As to quaternary structure, homooligomer. Interacts with rev1. Interacts with rev3l. Interacts with fzr1 (in complex with the anaphase promoting complex APC). May interact with cdc20.

It is found in the nucleus. It localises to the cytoplasm. Its subcellular location is the cytoskeleton. The protein localises to the spindle. Adapter protein able to interact with different proteins and involved in different biological processes. Mediates the interaction between the error-prone DNA polymerase zeta catalytic subunit rev3l and the inserter polymerase rev1, thereby mediating the second polymerase switching in translesion DNA synthesis. Translesion DNA synthesis releases the replication blockade of replicative polymerases, stalled in presence of DNA lesions. May also play a role in signal transduction in response to DNA damage. May regulate the activation of the anaphase promoting complex APC thereby regulating progression through the cell cycle. Through transcriptional regulation may play a role in epithelial-mesenchymal transdifferentiation. The polypeptide is Mitotic spindle assembly checkpoint protein MAD2B (mad2l2) (Xenopus tropicalis (Western clawed frog)).